We begin with the raw amino-acid sequence, 168 residues long: Dihydrofolate reductase (168 aa).

The DHFR domain occupies 1 to 159; sequence MISFIFAMDA…YDYEFLMYEK (159 aa). 5 to 7 is a substrate binding site; the sequence is IFA. NADP(+) contacts are provided by residues 6–7 and 14–19; these read FA and IGKDND. Asp27 serves as a coordination point for substrate. An NADP(+)-binding site is contributed by 43 to 46; sequence GRKT. Residue Arg57 coordinates substrate. Residues 62–65 and 95–100 each bind NADP(+); these read VTSA and IGGAQL. Residue Thr114 participates in substrate binding.

Belongs to the dihydrofolate reductase family.

It catalyses the reaction (6S)-5,6,7,8-tetrahydrofolate + NADP(+) = 7,8-dihydrofolate + NADPH + H(+). Its pathway is cofactor biosynthesis; tetrahydrofolate biosynthesis; 5,6,7,8-tetrahydrofolate from 7,8-dihydrofolate: step 1/1. Functionally, key enzyme in folate metabolism. Catalyzes an essential reaction for de novo glycine and purine synthesis, and for DNA precursor synthesis. This Bacillus subtilis (strain 168) protein is Dihydrofolate reductase (dfrA).